Consider the following 358-residue polypeptide: tRNA-specific 2-thiouridylase MnmA (358 aa).

ATP-binding positions include 8-15 and M35; that span reads AMSGGVDS. Residues 95–97 form an interaction with target base in tRNA region; it reads NPD. Residue C100 is the Nucleophile of the active site. A disulfide bridge connects residues C100 and C194. Residue G124 participates in ATP binding. The interaction with tRNA stretch occupies residues 144-146; that stretch reads KDQ. Catalysis depends on C194, which acts as the Cysteine persulfide intermediate. Residues 301–302 are interaction with tRNA; the sequence is RY.

This sequence belongs to the MnmA/TRMU family.

It localises to the cytoplasm. The catalysed reaction is S-sulfanyl-L-cysteinyl-[protein] + uridine(34) in tRNA + AH2 + ATP = 2-thiouridine(34) in tRNA + L-cysteinyl-[protein] + A + AMP + diphosphate + H(+). Catalyzes the 2-thiolation of uridine at the wobble position (U34) of tRNA, leading to the formation of s(2)U34. The chain is tRNA-specific 2-thiouridylase MnmA from Chlamydia trachomatis serovar D (strain ATCC VR-885 / DSM 19411 / UW-3/Cx).